A 308-amino-acid chain; its full sequence is ASVVGWGPHSLHACPALVLSNDVTIDAWCPLCGPHERLQFERIDTTLTCETHRINWTADGRPCGLNGTLFPRLHVSETRPQGPRRLWINCPLPAVRAQPGPVSLSPFERSPFQPYQCQLPSASSDGCPIIGHGLLPWNNLVTHPVLGKVLILNQMANFSLLPSFDTLLVDPLRLSVFAPDTRGAIRYLSTLLTLCPATCILPLGEPFSPNVPICRFPRDSNEPPLSEFELPPIQTPGLSWSVPAIDLFLTGPPSPCDRLHVWSSPQALQRFLHDPTLTWSELVASRKIRLDSPLKLQLLENEWLSRLF.

This is an uncharacterized protein from Bos taurus (Bovine).